The sequence spans 182 residues: NADH-quinone oxidoreductase subunit I (182 aa).

4Fe-4S ferredoxin-type domains follow at residues 52-82 (LTRDPDGEERCVACNLCAVACPVGCISLQKA) and 92-121 (DFFRINFSRCIFCGLCEEACPTTAIQLTPD). Positions 62, 65, 68, 72, 101, 104, 107, and 111 each coordinate [4Fe-4S] cluster.

The protein belongs to the complex I 23 kDa subunit family. NDH-1 is composed of 13 different subunits. Subunits NuoA, H, J, K, L, M, N constitute the membrane sector of the complex. The cofactor is [4Fe-4S] cluster.

It is found in the cell inner membrane. The catalysed reaction is a quinone + NADH + 5 H(+)(in) = a quinol + NAD(+) + 4 H(+)(out). Functionally, NDH-1 shuttles electrons from NADH, via FMN and iron-sulfur (Fe-S) centers, to quinones in the respiratory chain. The immediate electron acceptor for the enzyme in this species is believed to be ubiquinone. Couples the redox reaction to proton translocation (for every two electrons transferred, four hydrogen ions are translocated across the cytoplasmic membrane), and thus conserves the redox energy in a proton gradient. The chain is NADH-quinone oxidoreductase subunit I from Pseudomonas fluorescens (strain Pf0-1).